A 999-amino-acid polypeptide reads, in one-letter code: Desmoglein-3 (999 aa).

Residues 1–23 form the signal peptide; sequence MMGLFPRTTGALAIFVVVILVHG. Positions 24-49 are excised as a propeptide; it reads ELRIETKGQYDEEEMTMQQAKRRQKR. 4 consecutive Cadherin domains span residues 50–158, 159–268, 269–383, and 386–499; these read EWVK…PVFS, QQIF…PMFR, DSQY…GIAF, and ASKT…VLEK. At 50 to 615 the chain is on the extracellular side; that stretch reads EWVKFAKPCR…TRYGRPHSGR (566 aa). Asparagine 110 and asparagine 180 each carry an N-linked (GlcNAc...) asparagine glycan. Residues asparagine 459 and asparagine 545 are each glycosylated (N-linked (GlcNAc...) asparagine). A helical membrane pass occupies residues 616–640; the sequence is LGPAAIGLLLLGLLLLLLAPLLLLT. At 641–999 the chain is on the cytoplasmic side; that stretch reads CDCGAGSTGG…CTEDPCSRLI (359 aa). The segment at 642-714 is required for interaction with CTNND1 and localization at cell-cell junctions; that stretch reads DCGAGSTGGV…NTYARGTAVE (73 aa). Desmoglein repeat repeat units lie at residues 910 to 935 and 936 to 966; these read LSTSGSVQPAVSIPDPLQHGNYLVTE and TYSASGSLVQPSTAGFDPLLTQNVIVTERVI.

As to quaternary structure, homodimer. Part of a complex that contains DSG3, PKP1, YAP1 and YWHAG; the complex is required for localization of DSG3 and YAP1 to the cell membrane in keratinocytes. Interacts with PKP2. Interacts with CTNND1; the interaction facilitates DSG3 localization and retention at cell-cell junctions. Interacts with CDH1; the interaction is required for CDH1 localization to developing adherens junctions. Interacts with RAC1; the interaction is required for DSG3 translocation to cell-cell junctions, organization of cortical F-actin bundles and actin anchoring at cell-cell junctions. Interacts with DSC3; the interaction may limit the interaction of DSC3 with p38MAPK family members and therefore repress p38MAPK signaling activation. As to expression, expressed throughout the basal and spinous layer of the epidermis with weak expression in the granular layer (at protein level). Expressed in skin and mucosa (at protein level). Expressed in the basal layer of the outer root sheath of the telogen hair club, specifically at the cell membrane between the apex of the cells and the surrounding hair club (at protein level). Expression is less abundant between the lateral margins of the outer root sheath basal cells (at protein level). Also expressed in the tongue, tonsil and esophagus.

The protein localises to the cell membrane. Its subcellular location is the cell junction. The protein resides in the desmosome. It is found in the cytoplasm. It localises to the tight junction. Functionally, a component of desmosome cell-cell junctions which are required for positive regulation of cellular adhesion. Required for adherens and desmosome junction assembly in response to mechanical force in keratinocytes. Required for desmosome-mediated cell-cell adhesion of cells surrounding the telogen hair club and the basal layer of the outer root sheath epithelium, consequently is essential for the anchoring of telogen hairs in the hair follicle. Required for the maintenance of the epithelial barrier via promoting desmosome-mediated intercellular attachment of suprabasal epithelium to basal cells. May play a role in the protein stability of the desmosome plaque components DSP, JUP, PKP1, PKP2 and PKP3. Required for YAP1 localization at the plasma membrane in keratinocytes in response to mechanical strain, via the formation of an interaction complex composed of DSG3, PKP1 and YWHAG. May also be involved in the positive regulation of YAP1 target gene transcription and as a result cell proliferation. Positively regulates cellular contractility and cell junction formation via organization of cortical F-actin bundles and anchoring of actin to tight junctions, in conjunction with RAC1. The cytoplasmic pool of DSG3 is required for the localization of CDH1 and CTNNB1 at developing adherens junctions, potentially via modulation of SRC activity. Inhibits keratinocyte migration via suppression of p38MAPK signaling, may therefore play a role in moderating wound healing. The chain is Desmoglein-3 from Homo sapiens (Human).